A 415-amino-acid chain; its full sequence is MTYHPKSDFIAVMMERGFLADCTDYQGLDEALMKGCQPGYIGFDATAKSLHVGSLIQIMMLRWLQKTGHKPITLMGGGTTKVGDPSFRADERPLLTPAQIDDNIAGIRKVFAAYIDYDSGAENAALMLNNEEWLDDLNYLDFLRDIGRHFSVNRMLSFESVKSRLDREQSLSFLEFNYMILQAYDFMELNRRYGCILQMGGSDQWGNIVNGIDLTRRVIDHEVYGLTSPLLTTSDGKKMGKSQDGAVWLNPDMRSPYEFWQFWRNTTDADVGRFLKLYTELPVGECDRLGALAGSEINAAKVILANEVTALCHGAEAAATAEATAREVFEKGGIGDDLPTLTLGAADLPASIVQLIVKTGLAKSGKEAKRLIAEDGARLNDAPLTDAGMMIEAGDLAAPIKLSAGKKRHALVQLG.

An L-tyrosine-binding site is contributed by Y40. A 'HIGH' region motif is present at residues 45-54 (ATAKSLHVGS). Y178 and Q182 together coordinate L-tyrosine. Positions 238–242 (KMGKS) match the 'KMSKS' region motif. K241 provides a ligand contact to ATP. In terms of domain architecture, S4 RNA-binding spans 350–414 (ASIVQLIVKT…GKKRHALVQL (65 aa)).

This sequence belongs to the class-I aminoacyl-tRNA synthetase family. TyrS type 1 subfamily. As to quaternary structure, homodimer.

It is found in the cytoplasm. It carries out the reaction tRNA(Tyr) + L-tyrosine + ATP = L-tyrosyl-tRNA(Tyr) + AMP + diphosphate + H(+). Functionally, catalyzes the attachment of tyrosine to tRNA(Tyr) in a two-step reaction: tyrosine is first activated by ATP to form Tyr-AMP and then transferred to the acceptor end of tRNA(Tyr). The polypeptide is Tyrosine--tRNA ligase (Ruegeria pomeroyi (strain ATCC 700808 / DSM 15171 / DSS-3) (Silicibacter pomeroyi)).